A 705-amino-acid chain; its full sequence is Ion-translocating oxidoreductase complex subunit C (705 aa).

4Fe-4S ferredoxin-type domains lie at 368-397 (MGETPEEQGCIRCSACADACPADLLPQQLY) and 407-435 (KATAHNIADCIECGACAWVCPSSIPLVQY). C377, C380, C383, C387, C416, C419, C422, and C426 together coordinate [4Fe-4S] cluster. The disordered stretch occupies residues 536 to 684 (RARQAENIPA…EPVDPRKAAV (149 aa)).

This sequence belongs to the 4Fe4S bacterial-type ferredoxin family. RnfC subfamily. In terms of assembly, the complex is composed of six subunits: RnfA, RnfB, RnfC, RnfD, RnfE and RnfG. [4Fe-4S] cluster is required as a cofactor.

It localises to the cell inner membrane. Its function is as follows. Part of a membrane-bound complex that couples electron transfer with translocation of ions across the membrane. This Citrobacter koseri (strain ATCC BAA-895 / CDC 4225-83 / SGSC4696) protein is Ion-translocating oxidoreductase complex subunit C.